Here is a 710-residue protein sequence, read N- to C-terminus: Effector protein AvrPphD (710 aa).

Positions 1-15 (MNPLRSIQHNITTPP) are enriched in polar residues. Disordered stretches follow at residues 1–36 (MNPL…HPKR), 136–155 (ISFD…SVLS), and 173–207 (SSSL…DSGS).

Its subcellular location is the secreted. In terms of biological role, effector protein involved in non-host recognition and able to elicit hypersensitive response (HR). The chain is Effector protein AvrPphD (avrPphD) from Pseudomonas savastanoi pv. phaseolicola (Pseudomonas syringae pv. phaseolicola).